Reading from the N-terminus, the 138-residue chain is Histone H2AX (138 aa).

The interval 1 to 23 is disordered; that stretch reads MSTTGKGGKAKGKTASSKQVSRS. Position 2 is an N-acetylserine (serine 2). Lysine 6, lysine 9, lysine 11, lysine 13, and lysine 18 each carry N6-acetyllysine. Residue serine 123 is modified to Phosphoserine. Residue lysine 124 forms a Glycyl lysine isopeptide (Lys-Gly) (interchain with G-Cter in ubiquitin) linkage. Serine 125, serine 130, and serine 135 each carry phosphoserine. The short motif at 135 to 136 is the [ST]-Q motif element; it reads SQ.

This sequence belongs to the histone H2A family. The nucleosome is a histone octamer containing two molecules each of H2A, H2B, H3 and H4 assembled in one H3-H4 heterotetramer and two H2A-H2B heterodimers. The octamer wraps approximately 147 bp of DNA. Post-translationally, monoubiquitination of Lys-124 gives a specific tag for epigenetic transcriptional repression. In terms of processing, phosphorylated to form H2AX134ph (gamma-H2AX) in response to DNA double-strand breaks (DSBs) generated by exogenous genotoxic agents in both the mitotic MIC and the amitotic MAC. Gamma-H2AX is also found when programmed DNA rearrangements occur, namely homologous recombination in the MIC during prophase of meiosis, and chromosome fragmentation and DNA elimination in developing MACs. Gamma-H2AX is important to recover from exogenous DNA damage and to repair breaks associated with normal micronuclear meiosis and mitosis and macronuclear amitotic division. Acetylation occurs almost exclusively in the MAC.

Its subcellular location is the nucleus. The protein localises to the chromosome. Core component of nucleosome which plays a central role in DNA double strand break (DSB) repair. Nucleosomes wrap and compact DNA into chromatin, limiting DNA accessibility to the cellular machineries which require DNA as a template. Histones thereby play a central role in transcription regulation, DNA repair, DNA replication and chromosomal stability. DNA accessibility is regulated via a complex set of post-translational modifications of histones, also called histone code, and nucleosome remodeling. The polypeptide is Histone H2AX (HTA1) (Tetrahymena thermophila (strain SB210)).